The following is a 213-amino-acid chain: Kynurenine formamidase (213 aa).

Tryptophan 20 contributes to the substrate binding site. Positions 50, 54, and 56 each coordinate Zn(2+). The active-site Proton donor/acceptor is the histidine 60. Zn(2+) is bound by residues histidine 161 and glutamate 173.

This sequence belongs to the Cyclase 1 superfamily. KynB family. Homodimer. The cofactor is Zn(2+).

The enzyme catalyses N-formyl-L-kynurenine + H2O = L-kynurenine + formate + H(+). Its pathway is amino-acid degradation; L-tryptophan degradation via kynurenine pathway; L-kynurenine from L-tryptophan: step 2/2. Catalyzes the hydrolysis of N-formyl-L-kynurenine to L-kynurenine, the second step in the kynurenine pathway of tryptophan degradation. This Pseudomonas paraeruginosa (strain DSM 24068 / PA7) (Pseudomonas aeruginosa (strain PA7)) protein is Kynurenine formamidase.